We begin with the raw amino-acid sequence, 228 residues long: General odorant-binding protein 71 (228 aa).

The first 20 residues, 1–20, serve as a signal peptide directing secretion; it reads MCGAIVLLLLVGTSPAPVEG. Residues 50 to 131 are disordered; sequence TMGEWGQRDR…GNSSSSSSST (82 aa). Positions 55 to 72 are enriched in basic and acidic residues; it reads GQRDRNGEEQQMMRDYGR. The segment covering 83-99 has biased composition (low complexity); that stretch reads GGQTSGSSSSGSAGEHS. The span at 111–120 shows a compositional bias: gly residues; sequence AGQGGNGTRS. The segment covering 121 to 131 has biased composition (low complexity); that stretch reads GGNSSSSSSST. Intrachain disulfides connect C138–C199 and C185–C208.

This sequence belongs to the PBP/GOBP family.

It localises to the secreted. In terms of biological role, present in the aqueous fluid surrounding olfactory sensory dendrites and are thought to aid in the capture and transport of hydrophobic odorants into and through this fluid. This chain is General odorant-binding protein 71 (Obp71), found in Anopheles gambiae (African malaria mosquito).